Reading from the N-terminus, the 209-residue chain is Uracil phosphoribosyltransferase (209 aa).

Residues Arg79, Arg104, and 131–139 (DPMLATGGS) each bind 5-phospho-alpha-D-ribose 1-diphosphate. Uracil-binding positions include Ile194 and 199–201 (GDA). Asp200 is a binding site for 5-phospho-alpha-D-ribose 1-diphosphate.

Belongs to the UPRTase family. It depends on Mg(2+) as a cofactor.

The enzyme catalyses UMP + diphosphate = 5-phospho-alpha-D-ribose 1-diphosphate + uracil. It participates in pyrimidine metabolism; UMP biosynthesis via salvage pathway; UMP from uracil: step 1/1. Its activity is regulated as follows. Allosterically activated by GTP. Functionally, catalyzes the conversion of uracil and 5-phospho-alpha-D-ribose 1-diphosphate (PRPP) to UMP and diphosphate. The polypeptide is Uracil phosphoribosyltransferase (Francisella tularensis subsp. novicida (strain U112)).